We begin with the raw amino-acid sequence, 391 residues long: Large envelope protein (391 aa).

N-acetylmethionine is present on Met1. Gly2 carries N-myristoyl glycine; by host lipidation. A pre-S1 region spans residues 2-108 (GLNQSTFNPL…PPLRDTHPQA (107 aa)). The interval 2-163 (GLNQSTFNPL…FSTTGVPVST (162 aa)) is pre-S. At 2 to 170 (GLNQSTFNPL…VSTMDITSSG (169 aa)) the chain is on the virion surface; in external conformation side. The Intravirion; in internal conformation segment spans residues 2–242 (GLNQSTFNPL…PGYRWMCLRR (241 aa)). The tract at residues 73–107 (LSVTVPDTPPPPSTNRDKGRKPTPATPPLRDTHPQ) is disordered. Positions 109 to 163 (MTWNTSSFQSYLQNPKVRGLYFPAGGSTSSIVNPVPTTASTTSSSFSTTGVPVST) are pre-S2. A helical transmembrane segment spans residues 171–191 (FLGPLLALQAVFFLLTKILTM). The Intravirion; in external conformation segment spans residues 192–242 (PQSLDSLWTSLNFLGGTPACPGLNSQSPTSSHSPTCCPPTCPGYRWMCLRR). The helical transmembrane segment at 243-263 (SIIFLFILLLCLIFLLVLLDY) threads the bilayer. The Virion surface portion of the chain corresponds to 264 to 339 (QGMLPVCPLL…WALARFSWLN (76 aa)). N-linked (GlcNAc...) asparagine; by host glycosylation occurs at Asn311. The chain crosses the membrane as a helical span at residues 340 to 360 (SLLPFVQWFAGLSPTVWLLVI). Residues 361 to 366 (WMMWFW) are Intravirion-facing. The helical transmembrane segment at 367 to 389 (GPSLFSILSPFLPLLPLFFWLWA) threads the bilayer. Residues 390-391 (YI) are Virion surface-facing.

It belongs to the orthohepadnavirus major surface antigen family. In terms of assembly, in its internal form (Li-HBsAg), interacts with the capsid protein and with the isoform S. Interacts with host chaperone CANX. As to quaternary structure, associates with host chaperone CANX through its pre-S2 N glycan; this association may be essential for isoform M proper secretion. Interacts with isoform L. Interacts with the antigens of satellite virus HDV (HDVAgs); this interaction is required for encapsidation of HDV genomic RNA. In terms of processing, isoform M is N-terminally acetylated by host at a ratio of 90%, and N-glycosylated by host at the pre-S2 region. Post-translationally, myristoylated.

The protein localises to the virion membrane. The large envelope protein exists in two topological conformations, one which is termed 'external' or Le-HBsAg and the other 'internal' or Li-HBsAg. In its external conformation the protein attaches the virus to cell receptors and thereby initiating infection. This interaction determines the species specificity and liver tropism. This attachment induces virion internalization predominantly through caveolin-mediated endocytosis. The large envelope protein also assures fusion between virion membrane and endosomal membrane. In its internal conformation the protein plays a role in virion morphogenesis and mediates the contact with the nucleocapsid like a matrix protein. Its function is as follows. The middle envelope protein plays an important role in the budding of the virion. It is involved in the induction of budding in a nucleocapsid independent way. In this process the majority of envelope proteins bud to form subviral lipoprotein particles of 22 nm of diameter that do not contain a nucleocapsid. The chain is Large envelope protein from Woolly monkey hepatitis B virus (isolate Louisville) (WMHBV).